The primary structure comprises 180 residues: uncharacterized protein (180 aa).

Positions Arg17–Thr80 constitute an HTH dtxR-type domain.

This sequence belongs to the DtxR/MntR family.

This is an uncharacterized protein from Aeropyrum pernix (strain ATCC 700893 / DSM 11879 / JCM 9820 / NBRC 100138 / K1).